Reading from the N-terminus, the 433-residue chain is Glutamate-1-semialdehyde 2,1-aminomutase (433 aa).

Lys269 carries the post-translational modification N6-(pyridoxal phosphate)lysine.

This sequence belongs to the class-III pyridoxal-phosphate-dependent aminotransferase family. HemL subfamily. In terms of assembly, homodimer. The cofactor is pyridoxal 5'-phosphate.

The protein localises to the cytoplasm. It catalyses the reaction (S)-4-amino-5-oxopentanoate = 5-aminolevulinate. The protein operates within porphyrin-containing compound metabolism; protoporphyrin-IX biosynthesis; 5-aminolevulinate from L-glutamyl-tRNA(Glu): step 2/2. The polypeptide is Glutamate-1-semialdehyde 2,1-aminomutase (Renibacterium salmoninarum (strain ATCC 33209 / DSM 20767 / JCM 11484 / NBRC 15589 / NCIMB 2235)).